A 447-amino-acid chain; its full sequence is Cysteine--tRNA ligase (447 aa).

Cys28 lines the Zn(2+) pocket. The 'HIGH' region motif lies at 30 to 40; that stretch reads PTVYNYIHVGN. Zn(2+)-binding residues include Cys211, His236, and Glu240. The 'KMSKS' region signature appears at 268 to 272; that stretch reads KMSKS. Lys271 is an ATP binding site.

Belongs to the class-I aminoacyl-tRNA synthetase family. As to quaternary structure, monomer. Requires Zn(2+) as cofactor.

Its subcellular location is the cytoplasm. It carries out the reaction tRNA(Cys) + L-cysteine + ATP = L-cysteinyl-tRNA(Cys) + AMP + diphosphate. This Streptococcus mutans serotype c (strain ATCC 700610 / UA159) protein is Cysteine--tRNA ligase.